The sequence spans 382 residues: Guanylate kinase 1 (382 aa).

The 183-residue stretch at 128 to 310 (QKPIVISGPS…CYENLKKLLS (183 aa)) folds into the Guanylate kinase-like domain. 135-142 (GPSGVGKG) provides a ligand contact to ATP. Active-site residues include R168, R261, and R272. N295 and D296 together coordinate ATP.

It belongs to the guanylate kinase family. In terms of assembly, monomer.

Its subcellular location is the cytoplasm. The protein localises to the nucleus. It carries out the reaction GMP + ATP = GDP + ADP. Functionally, essential for recycling GMP and indirectly, cGMP. This Oryza sativa subsp. japonica (Rice) protein is Guanylate kinase 1 (GK1).